The sequence spans 48 residues: DNA-directed RNA polymerase subunit Rpo12 (48 aa).

Zn(2+)-binding residues include Cys-6, Cys-9, Cys-26, and Cys-29.

It belongs to the archaeal Rpo12/eukaryotic RPC10 RNA polymerase subunit family. In terms of assembly, part of the 13-subunit RNA polymerase. The cofactor is Zn(2+).

The protein localises to the cytoplasm. The catalysed reaction is RNA(n) + a ribonucleoside 5'-triphosphate = RNA(n+1) + diphosphate. Its function is as follows. DNA-dependent RNA polymerase (RNAP) catalyzes the transcription of DNA into RNA using the four ribonucleoside triphosphates as substrates. In Sulfolobus acidocaldarius (strain ATCC 33909 / DSM 639 / JCM 8929 / NBRC 15157 / NCIMB 11770), this protein is DNA-directed RNA polymerase subunit Rpo12.